Here is a 204-residue protein sequence, read N- to C-terminus: Peptidyl-tRNA hydrolase (204 aa).

Tyr14 contacts tRNA. His19 functions as the Proton acceptor in the catalytic mechanism. 3 residues coordinate tRNA: Phe64, Asn66, and Asn112.

This sequence belongs to the PTH family. Monomer.

It is found in the cytoplasm. The enzyme catalyses an N-acyl-L-alpha-aminoacyl-tRNA + H2O = an N-acyl-L-amino acid + a tRNA + H(+). Its function is as follows. Hydrolyzes ribosome-free peptidyl-tRNAs (with 1 or more amino acids incorporated), which drop off the ribosome during protein synthesis, or as a result of ribosome stalling. Catalyzes the release of premature peptidyl moieties from peptidyl-tRNA molecules trapped in stalled 50S ribosomal subunits, and thus maintains levels of free tRNAs and 50S ribosomes. This chain is Peptidyl-tRNA hydrolase, found in Azorhizobium caulinodans (strain ATCC 43989 / DSM 5975 / JCM 20966 / LMG 6465 / NBRC 14845 / NCIMB 13405 / ORS 571).